The sequence spans 138 residues: Large ribosomal subunit protein eL14A (138 aa).

Position 2 is an N-acetylserine (Ser-2).

It belongs to the eukaryotic ribosomal protein eL14 family. As to quaternary structure, component of the large ribosomal subunit (LSU). Mature yeast ribosomes consist of a small (40S) and a large (60S) subunit. The 40S small subunit contains 1 molecule of ribosomal RNA (18S rRNA) and 33 different proteins (encoded by 57 genes). The large 60S subunit contains 3 rRNA molecules (25S, 5.8S and 5S rRNA) and 46 different proteins (encoded by 81 genes). In terms of processing, N-terminally acetylated by acetyltransferase NatA.

It localises to the cytoplasm. Functionally, component of the ribosome, a large ribonucleoprotein complex responsible for the synthesis of proteins in the cell. The small ribosomal subunit (SSU) binds messenger RNAs (mRNAs) and translates the encoded message by selecting cognate aminoacyl-transfer RNA (tRNA) molecules. The large subunit (LSU) contains the ribosomal catalytic site termed the peptidyl transferase center (PTC), which catalyzes the formation of peptide bonds, thereby polymerizing the amino acids delivered by tRNAs into a polypeptide chain. The nascent polypeptides leave the ribosome through a tunnel in the LSU and interact with protein factors that function in enzymatic processing, targeting, and the membrane insertion of nascent chains at the exit of the ribosomal tunnel. This is Large ribosomal subunit protein eL14A from Saccharomyces cerevisiae (strain ATCC 204508 / S288c) (Baker's yeast).